The primary structure comprises 54 residues: Large ribosomal subunit protein bL33 (54 aa).

This sequence belongs to the bacterial ribosomal protein bL33 family.

In Symbiobacterium thermophilum (strain DSM 24528 / JCM 14929 / IAM 14863 / T), this protein is Large ribosomal subunit protein bL33.